The sequence spans 198 residues: LPICPSGSVGCQVSLENLFDRAVKLSHYIHSLSSEMFNEFDERYAQGRGFLTKAINGCHTSSLTTPEDKEQAQQIHHEDLLNLVLGVLRSWNDPLLHLVSEVQSIKEAPDTILKAVEIEEQDKRLLEGMEKIVGQVHPGEIENELYSPWSGLPSLQQVDEDSRLFAFYNLLHCLRRDSHKIDNYLKLLKCRLIHDNDC.

3 disulfides stabilise this stretch: C4/C11, C58/C173, and C190/C198.

The protein belongs to the somatotropin/prolactin family. In terms of tissue distribution, pituitary gland.

Its subcellular location is the secreted. In Chelonia mydas (Green sea-turtle), this protein is Prolactin.